The following is a 563-amino-acid chain: Zinc finger CCHC domain-containing protein 7 (563 aa).

Disordered stretches follow at residues 41–64 and 133–157; these read SQNL…VPGA and SHST…QNSS. Positions 133–142 are enriched in polar residues; the sequence is SHSTPKVSAP. Positions 143–157 are enriched in low complexity; sequence QSNNFKSQKSCQNSS. CCHC-type zinc fingers lie at residues 265 to 282, 287 to 304, 305 to 322, 328 to 345, and 372 to 389; these read VVCR…NCPV, PACC…SCPS, RYCL…ECIE, KTCH…ACPE, and VYCC…ECKE. The disordered stretch occupies residues 443-494; that stretch reads KVDAKPPAKKRKKKHPSKKERKGTIRDYECAETKQKKKHKKRKSGLQEIEGD. The span at 449–463 shows a compositional bias: basic residues; sequence PAKKRKKKHPSKKER. Positions 464-476 are enriched in basic and acidic residues; sequence KGTIRDYECAETK. Basic residues predominate over residues 477-486; the sequence is QKKKHKKRKS.

Component of a nucleolar TRAMP-like complex, an ATP-dependent exosome regulatory complex consisting of a helicase (MTREX), an oligadenylate polymerase (PAPD5 or PAPD7), and a substrate specific RNA-binding factor (ZCCHC7 or ZCCHC8). Several TRAMP-like complexes exist with specific compositions and are associated with nuclear, or nucleolar RNA exosomes.

The protein resides in the nucleus. The protein localises to the nucleolus. This is Zinc finger CCHC domain-containing protein 7 (zcchc7) from Xenopus laevis (African clawed frog).